The chain runs to 221 residues: N-(5'-phosphoribosyl)anthranilate isomerase (221 aa).

Belongs to the TrpF family.

It carries out the reaction N-(5-phospho-beta-D-ribosyl)anthranilate = 1-(2-carboxyphenylamino)-1-deoxy-D-ribulose 5-phosphate. It participates in amino-acid biosynthesis; L-tryptophan biosynthesis; L-tryptophan from chorismate: step 3/5. This chain is N-(5'-phosphoribosyl)anthranilate isomerase, found in Chlorobaculum tepidum (strain ATCC 49652 / DSM 12025 / NBRC 103806 / TLS) (Chlorobium tepidum).